The primary structure comprises 518 residues: MLLRRVLGYGVVGAGLASAGWSLHTNDYDPNSLGIVRLSRSAAAVVDVALTYKRELYYKEWDKETPEYKAEKSRVHKIAAEKLLQLICINKGVYIKVGQHIGALEYLLPKEFVQTMKVLHSDAPQNPIEDLYKVIRQDLHCNPEEIFDSFEREPLGTASLAQVHKARLKTGELVAVKVQHPYVKGNSRVDMKTMELAVNVLARIFPDFKIHWLVEESKKNLPIELDFLNEGRNAEKVAKQFKKYSWLRVPKIYWKYSSSRVLVMEYLEGGHVTDLDYIRRNKIDSFAVANRIGQLYSEMIFRTGFVHSDPHPGNILVRRTPENSLEIVLLDHGLYANLTDKFRYDYSNLWLSILKVDRKAMRQHSEQLGIKGDLYGLFACMVTGRPWETVMQGLTKVKYSKEEKNTLQNNTSLVLPHISDVLEQVDRQMLLILKTNDLIRGIESTLRTQNRMTAFWVMSKCCVQSSYAEQRAKQSDSGSSRILWLRVRERWELFKLNCYYLYLGLINFGFLEALKQVI.

Residues 149–468 (SFEREPLGTA…SKCCVQSSYA (320 aa)) form the Protein kinase domain. ATP-binding positions include 155 to 163 (LGTASLAQV) and lysine 177. Catalysis depends on aspartate 309, which acts as the Proton acceptor.

It belongs to the protein kinase superfamily. ADCK protein kinase family.

The protein resides in the mitochondrion. Functionally, essential for maintaining mitochondrial cristae formation and mitochondrial function by acting via YME1L to regulate the mitochondrial structural proteins Opa1 and Mitofilin. This function is likely to be kinase-independent. Functions in tracheal development and larval molting probably by acting in sterol modification and/or intracellular lipid trafficking. The action of this enzyme is not yet clear. It is not known if it has protein kinase activity and what type of substrate it would phosphorylate (Ser, Thr or Tyr). The protein is AarF domain-containing kinase 1 of Drosophila melanogaster (Fruit fly).